We begin with the raw amino-acid sequence, 213 residues long: Translation initiation factor IF-3 (213 aa).

A disordered region spans residues 193 to 213; that stretch reads EKIASLPPLPPDNSGEPEDDE.

The protein belongs to the IF-3 family. As to quaternary structure, monomer.

The protein localises to the cytoplasm. IF-3 binds to the 30S ribosomal subunit and shifts the equilibrium between 70S ribosomes and their 50S and 30S subunits in favor of the free subunits, thus enhancing the availability of 30S subunits on which protein synthesis initiation begins. The chain is Translation initiation factor IF-3 from Chlorobaculum tepidum (strain ATCC 49652 / DSM 12025 / NBRC 103806 / TLS) (Chlorobium tepidum).